The sequence spans 93 residues: MSRSLKKGPFVDEHLMKKVEAQADQEKKSVIKTWSRRSTIFPSFIGYTIAVYDGRKHVPVYIQEDMVGHKLGEFVPTRTFHGHGNDDKKTGVR.

The protein belongs to the universal ribosomal protein uS19 family.

Protein S19 forms a complex with S13 that binds strongly to the 16S ribosomal RNA. The chain is Small ribosomal subunit protein uS19 from Ligilactobacillus salivarius (strain UCC118) (Lactobacillus salivarius).